Reading from the N-terminus, the 162-residue chain is Large ribosomal subunit protein bL17 (162 aa).

Positions 126-162 (ATAKKATRTRRSKKSAAATEAPAAPAAETTEEAPKAE) are disordered. Basic residues predominate over residues 130–139 (KATRTRRSKK). Positions 140-153 (SAAATEAPAAPAAE) are enriched in low complexity.

Belongs to the bacterial ribosomal protein bL17 family. In terms of assembly, part of the 50S ribosomal subunit. Contacts protein L32.

The chain is Large ribosomal subunit protein bL17 from Phocaeicola vulgatus (strain ATCC 8482 / DSM 1447 / JCM 5826 / CCUG 4940 / NBRC 14291 / NCTC 11154) (Bacteroides vulgatus).